Reading from the N-terminus, the 209-residue chain is Iron-sulfur cluster assembly 2 homolog, mitochondrial (209 aa).

The transit peptide at 1 to 27 directs the protein to the mitochondrion; sequence MIRSIFKKNSSLPYFLKRSFITKPHSI. Fe cation contacts are provided by cysteine 134, cysteine 199, and cysteine 201.

Belongs to the HesB/IscA family. The cofactor is Fe cation.

It is found in the mitochondrion. Involved in the maturation of mitochondrial 4Fe-4S proteins functioning late in the iron-sulfur cluster assembly pathway. May be involved in the binding of an intermediate of Fe/S cluster assembly. The polypeptide is Iron-sulfur cluster assembly 2 homolog, mitochondrial (isca2) (Dictyostelium discoideum (Social amoeba)).